Consider the following 452-residue polypeptide: Probable phosphoglucosamine mutase (452 aa).

The active-site Phosphoserine intermediate is the S101. Positions 101, 242, 244, and 246 each coordinate Mg(2+). S101 is subject to Phosphoserine.

It belongs to the phosphohexose mutase family. Requires Mg(2+) as cofactor. In terms of processing, activated by phosphorylation.

It carries out the reaction alpha-D-glucosamine 1-phosphate = D-glucosamine 6-phosphate. Catalyzes the conversion of glucosamine-6-phosphate to glucosamine-1-phosphate. The chain is Probable phosphoglucosamine mutase from Methanosphaera stadtmanae (strain ATCC 43021 / DSM 3091 / JCM 11832 / MCB-3).